Here is a 390-residue protein sequence, read N- to C-terminus: Alanine racemase (390 aa).

The Proton acceptor; specific for D-alanine role is filled by Lys-46. Residue Lys-46 is modified to N6-(pyridoxal phosphate)lysine. Substrate is bound at residue Arg-144. Catalysis depends on Tyr-275, which acts as the Proton acceptor; specific for L-alanine. Residue Met-323 participates in substrate binding.

The protein belongs to the alanine racemase family. The cofactor is pyridoxal 5'-phosphate.

The enzyme catalyses L-alanine = D-alanine. The protein operates within amino-acid biosynthesis; D-alanine biosynthesis; D-alanine from L-alanine: step 1/1. Its function is as follows. Catalyzes the interconversion of L-alanine and D-alanine. May also act on other amino acids. In Mycolicibacterium vanbaalenii (strain DSM 7251 / JCM 13017 / BCRC 16820 / KCTC 9966 / NRRL B-24157 / PYR-1) (Mycobacterium vanbaalenii), this protein is Alanine racemase (alr).